The sequence spans 152 residues: Stigma-specific STIG1-like protein 1 (152 aa).

The N-terminal stretch at 1–19 (MAFVKLLVSIAITTAITIA) is a signal peptide.

This sequence belongs to the STIG1 family.

In Arabidopsis thaliana (Mouse-ear cress), this protein is Stigma-specific STIG1-like protein 1.